Here is a 273-residue protein sequence, read N- to C-terminus: Cytochrome b-c1 complex subunit Rieske, mitochondrial (273 aa).

The transit peptide at 1-61 directs the protein to the mitochondrion; that stretch reads MLRVAGRRLS…PFFVASRGFS (61 aa). Residues 25 to 46 are disordered; that stretch reads PLAGAGVPDRDDDSARGRSQPR. The Mitochondrial matrix portion of the chain corresponds to 62-110; sequence STETVVPRNQDAGLADLPATVAAVKNPNPKVVYDEYNHERYPPGDPSKR. A helical membrane pass occupies residues 111-133; sequence AFAYFVLSGGRFIYASLLRLLVL. The Mitochondrial intermembrane portion of the chain corresponds to 134–273; the sequence is KFVLSMSASK…FLEENKLLVG (140 aa). Residues 176–271 form the Rieske domain; that stretch reads RRRTEDDIKL…YSFLEENKLL (96 aa). Residues C216, H218, C235, and H238 each contribute to the [2Fe-2S] cluster site. A disulfide bridge links C221 with C237.

This sequence belongs to the Rieske iron-sulfur protein family. In terms of assembly, component of the ubiquinol-cytochrome c oxidoreductase (cytochrome b-c1 complex, complex III, CIII), a multisubunit enzyme composed of 3 respiratory subunits cytochrome b, cytochrome c1 and Rieske protein, 2 core protein subunits, and several low-molecular weight protein subunits. The complex exists as an obligatory dimer and forms supercomplexes (SCs) in the inner mitochondrial membrane with cytochrome c oxidase (complex IV, CIV). It depends on [2Fe-2S] cluster as a cofactor.

It is found in the mitochondrion inner membrane. The catalysed reaction is a quinol + 2 Fe(III)-[cytochrome c](out) = a quinone + 2 Fe(II)-[cytochrome c](out) + 2 H(+)(out). Its function is as follows. Component of the ubiquinol-cytochrome c oxidoreductase, a multisubunit transmembrane complex that is part of the mitochondrial electron transport chain which drives oxidative phosphorylation. The respiratory chain contains 3 multisubunit complexes succinate dehydrogenase (complex II, CII), ubiquinol-cytochrome c oxidoreductase (cytochrome b-c1 complex, complex III, CIII) and cytochrome c oxidase (complex IV, CIV), that cooperate to transfer electrons derived from NADH and succinate to molecular oxygen, creating an electrochemical gradient over the inner membrane that drives transmembrane transport and the ATP synthase. The cytochrome b-c1 complex catalyzes electron transfer from ubiquinol to cytochrome c, linking this redox reaction to translocation of protons across the mitochondrial inner membrane, with protons being carried across the membrane as hydrogens on the quinol. In the process called Q cycle, 2 protons are consumed from the matrix, 4 protons are released into the intermembrane space and 2 electrons are passed to cytochrome c. The Rieske protein is a catalytic core subunit containing a [2Fe-2S] iron-sulfur cluster. It cycles between 2 conformational states during catalysis to transfer electrons from the quinol bound in the Q(0) site in cytochrome b to cytochrome c1. The protein is Cytochrome b-c1 complex subunit Rieske, mitochondrial of Zea mays (Maize).